A 544-amino-acid polypeptide reads, in one-letter code: Major royal jelly protein 3 (544 aa).

The signal sequence occupies residues 1–20; sequence MTKWLLLVVCLGIACQDVTS. Asn183 is a glycosylation site (N-linked (GlcNAc...) asparagine). The segment at 421–544 is disordered; the sequence is RYHNQNAGNQ…NQVHHSSKLH (124 aa). Repeat copies occupy residues 424–428, 429–433, 434–438, 439–443, 444–448, 449–453, 454–458, 459–463, 464–468, 469–473, 474–478, 479–483, 484–488, 489–493, 494–498, 499–503, 504–508, 509–513, 514–518, and 519–523. 3 stretches are compositionally biased toward low complexity: residues 424–460, 468–510, and 518–530; these read NQNA…GNRQ, NKQN…GNRQ, and NRQN…QNDN. The interval 424–523 is 23 X 5 AA tandem repeats of [NKR]-[RQ]-N-[AGD]-[DNG]; the sequence is NQNAGNQNAD…KRNGNRQNDN (100 aa). Residues 524–525 form a 21; half-length repeat; it reads QN. A run of 2 repeats spans residues 526–530 and 531–535.

The protein belongs to the major royal jelly protein family. Homoligomer; in the absence of RNA, assembles into a higher-order oligomeric form, composed of around 20 monomer units. Found in and secreted from the hypopharyngeal glands of the worker honey bee (at protein level); expression peaks at 12 days post eclosion. Expressed in the brains of worker bees. Expressed in the brains of adult worker bees peaking at 12 days post eclosion (at protein level). Expressed in the spermatheca of adult queen bees (at protein level); Expression levels are higher in mated queens than in virgin queens. Expressed in queen bee ovaries and male drone testes. Expression in the head of forager worker bees is lower than in the heads of nurse worker bees.

It localises to the secreted. Its function is as follows. Abundant protein component of royal jelly, a substance produced in the hypopharyngeal gland containing proteins, free amino acids, fatty acids, sugars and other nutrients, which is fed to developing larvae by worker nurse bees. Major royal jelly proteins (MRJPs) are high in essential amino acids and probably have a nutritional function in larval food. All larvae are fed some royal jelly (also known as worker jelly) early in their development but it forms the principal source of nutrition for larvae destined to become queen bees. Secreted RNA-binding protein required to concentrate, stabilize and enhance environmental RNA bioavailability in the honey bee royal jelly. Acts as a RNA-aggregating protein: binds 18 nucleotides and longer single- and double-stranded RNA (ssRNA and dsRNA, respectively) in a non-specific manner. RNA-binding drives super-order assembly of oligomers into extracellular ribonucleoprotein granules that concentrate, protect and enhance RNA uptake granules, facilitating RNA transfer among bees. Produced in the spermatheca of adult queen bees, along with other major royal jelly proteins, where it may act as a nutrient supply for sperm stored by mated queens, or be involved in energy metabolism. This Apis mellifera (Honeybee) protein is Major royal jelly protein 3.